The sequence spans 215 residues: MSLGILGRKLGMTQIFDEEGRAIPVTVVEAGPCPVTQVKSEATDGYTAVQLGFGTAREKVLTRPEVGHCKKAGLEAPVRHLREFRLPDSSQYTPGQQITVDLFAAGQLVDVVGTSIGKGFAGGQKRHHFGRGPMAHGSKNHRAPGSIGAGTTPGRVFPGKRMPGRMGNERVTVRKLTVVRVIPERNVILIQGGLPGVEGGLLMISPAKSVGRAKG.

The disordered stretch occupies residues 134–166 (MAHGSKNHRAPGSIGAGTTPGRVFPGKRMPGRM).

It belongs to the universal ribosomal protein uL3 family. As to quaternary structure, part of the 50S ribosomal subunit. Forms a cluster with proteins L14 and L19.

One of the primary rRNA binding proteins, it binds directly near the 3'-end of the 23S rRNA, where it nucleates assembly of the 50S subunit. This chain is Large ribosomal subunit protein uL3, found in Gloeobacter violaceus (strain ATCC 29082 / PCC 7421).